Consider the following 472-residue polypeptide: Glutamate-1-semialdehyde 2,1-aminomutase 2, chloroplastic (472 aa).

Residues 1–36 (MAATLTGSGIALGFSCSAKFSKRASSSSNRRCIKMS) constitute a chloroplast transit peptide. N6-(pyridoxal phosphate)lysine is present on Lys312.

Belongs to the class-III pyridoxal-phosphate-dependent aminotransferase family. HemL subfamily. Homodimer. The cofactor is pyridoxal 5'-phosphate. As to expression, expressed in leaf primordia and shoot apical meristems (SAM).

The protein localises to the plastid. The protein resides in the chloroplast. The catalysed reaction is (S)-4-amino-5-oxopentanoate = 5-aminolevulinate. It functions in the pathway porphyrin-containing compound metabolism; protoporphyrin-IX biosynthesis; 5-aminolevulinate from L-glutamyl-tRNA(Glu): step 2/2. Its pathway is porphyrin-containing compound metabolism; chlorophyll biosynthesis. Functionally, transaminase converting glutamate 1-semialdehyde (GSA) to 5-aminolevulinate (ALA). Involved in the biosynthesis of tetrapyrroles. The chain is Glutamate-1-semialdehyde 2,1-aminomutase 2, chloroplastic from Arabidopsis thaliana (Mouse-ear cress).